The following is a 700-amino-acid chain: Elongation factor G (700 aa).

Residues 10–286 form the tr-type G domain; it reads TKVRNIGIMA…AVIDYLPNPL (277 aa). Residues 19 to 26, 83 to 87, and 137 to 140 each bind GTP; these read AHIDAGKT, DTPGH, and NKMD.

This sequence belongs to the TRAFAC class translation factor GTPase superfamily. Classic translation factor GTPase family. EF-G/EF-2 subfamily.

The protein resides in the cytoplasm. In terms of biological role, catalyzes the GTP-dependent ribosomal translocation step during translation elongation. During this step, the ribosome changes from the pre-translocational (PRE) to the post-translocational (POST) state as the newly formed A-site-bound peptidyl-tRNA and P-site-bound deacylated tRNA move to the P and E sites, respectively. Catalyzes the coordinated movement of the two tRNA molecules, the mRNA and conformational changes in the ribosome. The sequence is that of Elongation factor G from Mycolicibacterium vanbaalenii (strain DSM 7251 / JCM 13017 / BCRC 16820 / KCTC 9966 / NRRL B-24157 / PYR-1) (Mycobacterium vanbaalenii).